A 414-amino-acid chain; its full sequence is Putative F-box/kelch-repeat protein At2g29800 (414 aa).

The segment at 1–61 is disordered; that stretch reads MASISETSDD…EVENVPPIPR (61 aa). Basic and acidic residues predominate over residues 20 to 35; sequence KPEEPHKNPQEEKENQ. The segment covering 40–54 has biased composition (acidic residues); it reads NEADEEDDHQDEEVE. Residues 58 to 105 form the F-box domain; it reads PIPRKIPPVLIENTIAPLRRCHYPKLSLLSNAFRQVISSEDLFQVRSL. Kelch repeat units follow at residues 163-211, 212-258, 263-302, and 305-349; these read KIYV…VIDG, RIYV…IVHV, KIYIMDGDYCFAYDPRRRRWETWGPESAQRSYWHLSSCVV, and LLYA…SKMA.

The chain is Putative F-box/kelch-repeat protein At2g29800 from Arabidopsis thaliana (Mouse-ear cress).